A 350-amino-acid polypeptide reads, in one-letter code: Heat-inducible transcription repressor HrcA (350 aa).

The protein belongs to the HrcA family.

In terms of biological role, negative regulator of class I heat shock genes (grpE-dnaK-dnaJ and groELS operons). Prevents heat-shock induction of these operons. This chain is Heat-inducible transcription repressor HrcA, found in Xanthomonas campestris pv. campestris (strain ATCC 33913 / DSM 3586 / NCPPB 528 / LMG 568 / P 25).